Reading from the N-terminus, the 114-residue chain is ATP synthase epsilon chain (114 aa).

Belongs to the ATPase epsilon chain family. As to quaternary structure, F-type ATPases have 2 components, CF(1) - the catalytic core - and CF(0) - the membrane proton channel. CF(1) has five subunits: alpha(3), beta(3), gamma(1), delta(1), epsilon(1). CF(0) has three main subunits: a, b and c.

It is found in the cell membrane. Produces ATP from ADP in the presence of a proton gradient across the membrane. The sequence is that of ATP synthase epsilon chain from Wolbachia pipientis wMel.